The primary structure comprises 104 residues: Growth-regulated protein homolog (104 aa).

The first 31 residues, 1-31 (MAPAATAAAPRLLRAALLLLLLVAAGRRAAG), serve as a signal peptide directing secretion. 2 cysteine pairs are disulfide-bonded: cysteine 40–cysteine 66 and cysteine 42–cysteine 82.

This sequence belongs to the intercrine alpha (chemokine CxC) family.

It is found in the secreted. In terms of biological role, plays a role in monocyte adhesion to the endothelium. This Oryctolagus cuniculus (Rabbit) protein is Growth-regulated protein homolog.